A 144-amino-acid chain; its full sequence is Peroxisomal membrane protein PEX34 (144 aa).

A run of 3 helical transmembrane segments spans residues 18–30 (NIWS…LDFF), 52–73 (VWLC…KLCK), and 109–131 (TAAL…RLFK).

In terms of assembly, homooligomer. Interacts with PEX11, PEX25 and PEX27.

The protein localises to the peroxisome membrane. Functionally, in concert with the three peroxisome divisional factors, PEX11, PEX25 and PEX27, controls peroxisome morphology and abundance under conditions of peroxisome proliferation. Maintains mature peroxisomes in actively dividing cells. This Saccharomyces cerevisiae (strain ATCC 204508 / S288c) (Baker's yeast) protein is Peroxisomal membrane protein PEX34 (PEX34).